Here is a 186-residue protein sequence, read N- to C-terminus: Ribosome-recycling factor (186 aa).

This sequence belongs to the RRF family.

The protein localises to the cytoplasm. Its function is as follows. Responsible for the release of ribosomes from messenger RNA at the termination of protein biosynthesis. May increase the efficiency of translation by recycling ribosomes from one round of translation to another. This is Ribosome-recycling factor from Coprothermobacter proteolyticus (strain ATCC 35245 / DSM 5265 / OCM 4 / BT).